The following is a 310-amino-acid chain: Methionyl-tRNA formyltransferase (310 aa).

Position 109–112 (109–112) interacts with (6S)-5,6,7,8-tetrahydrofolate; the sequence is SLLP.

The protein belongs to the Fmt family.

It carries out the reaction L-methionyl-tRNA(fMet) + (6R)-10-formyltetrahydrofolate = N-formyl-L-methionyl-tRNA(fMet) + (6S)-5,6,7,8-tetrahydrofolate + H(+). Attaches a formyl group to the free amino group of methionyl-tRNA(fMet). The formyl group appears to play a dual role in the initiator identity of N-formylmethionyl-tRNA by promoting its recognition by IF2 and preventing the misappropriation of this tRNA by the elongation apparatus. In Pseudomonas putida (strain W619), this protein is Methionyl-tRNA formyltransferase.